Reading from the N-terminus, the 286-residue chain is Dioxygenase trt7 (286 aa).

Fe cation contacts are provided by H129, D131, and H206.

Belongs to the PhyH family. In terms of assembly, homodimer. The cofactor is Fe cation.

It functions in the pathway secondary metabolite biosynthesis; terpenoid biosynthesis. In terms of biological role, dioxygenase; part of the gene cluster that mediates the biosynthesis of terretonin, a fungal meroterpenoid that acts as a mycotoxin. The first step of the pathway is the synthesis of 3,5-dimethylorsellinic acid (DMOA) by the polyketide synthase trt4. DMOA is then prenylated into farnesyl-DMOA by the polyprenyl transferase trt2. Methylation by the methyltransferase trt5 then leads to farnesyl-DMOA methyl ester which is further subject to epoxidation by the FAD-dependent monooxygenase trt8 to yield epoxyfarnesyl-DMOA methyl ester. Cyclization of epoxyfarnesyl-DMOA methyl ester by the terpene cyclase trt1 leads to a tetracycle intermediate which is in turn converted to preterretonin. Dehydrogenase trt9 comes next to transform preterretonin to preterrenoid. The FAD-dependent monooxygenase trt3 is then required for the C-hydroxylation at C16 of preterrenoid to yield terrenoid. The cytochrome P450 trt6 catalyzes three successive oxidations to transform terrenoid into an unstable intermediate, which then undergoes the D-ring expansion and unusual rearrangement of the methoxy group to afford the core skeleton of terretonin. Trt14 catalyzes the D-ring expansion of terretonin involving intramolecular methoxy rearrangement as well as the hydrolysis of the expanded D-ring and the methyl ester moiety. Finally, the nonheme iron-dependent dioxygenase trt7 accomplishes the last two oxidation reactions steps to complete the biosynthesis of terretonin. Terretonin C is produced via spontaneous decarboxylation of the terretonin precursor. Another shunt product of the terretonin biosynthesis is dihydrofarnesyl-DMOA, derived from epoxyfarnesyl-DMOA through hydrolysis of the epoxide. The sequence is that of Dioxygenase trt7 from Aspergillus terreus (strain NIH 2624 / FGSC A1156).